The chain runs to 311 residues: Dihydroorotate dehydrogenase A (fumarate) (311 aa).

Residues S19 and 43–44 contribute to the FMN site; that span reads KS. Residues K43, 67–71, and N127 each bind substrate; that span reads NSMGL. Position 127 (N127) interacts with FMN. The active-site Nucleophile is the C130. The FMN site is built by K164 and V192. 193–194 lines the substrate pocket; the sequence is NS. FMN is bound by residues G221, 249–250, and 271–272; these read GG and GT.

It belongs to the dihydroorotate dehydrogenase family. Type 1 subfamily. As to quaternary structure, homodimer. It depends on FMN as a cofactor.

Its subcellular location is the cytoplasm. The catalysed reaction is (S)-dihydroorotate + fumarate = orotate + succinate. Its pathway is pyrimidine metabolism; UMP biosynthesis via de novo pathway. Catalyzes the conversion of dihydroorotate to orotate with fumarate as the electron acceptor. The polypeptide is Dihydroorotate dehydrogenase A (fumarate) (pyrDA) (Lactococcus lactis subsp. lactis (strain IL1403) (Streptococcus lactis)).